Reading from the N-terminus, the 479-residue chain is Serralysin C (479 aa).

The propeptide occupies 1-17 (MGKNLSLRQDDAQHALS). His-188 is a binding site for Zn(2+). Glu-189 is an active-site residue. Residues His-192 and Tyr-228 each contribute to the Zn(2+) site. Positions 265, 267, 297, 299, 300, 302, 339, 341, 346, 348, 350, 355, 357, 359, 363, 364, 365, 366, 368, 372, 373, 375, 377, 381, 382, 383, 384, 386, 395, 402, and 412 each coordinate Ca(2+). Hemolysin-type calcium-binding repeat units lie at residues 344 to 361 (IGGSGNDILVGNSADNIL), 362 to 379 (QGGAGNDVLYGGAGADTL), and 380 to 397 (YGGAGRDTFVYGSGQDST).

The protein belongs to the peptidase M10B family. Ca(2+) is required as a cofactor. It depends on Zn(2+) as a cofactor.

The protein resides in the secreted. It carries out the reaction Preferential cleavage of bonds with hydrophobic residues in P1'.. This chain is Serralysin C (prtC), found in Dickeya chrysanthemi (Pectobacterium chrysanthemi).